The following is a 287-amino-acid chain: AA9 family lytic polysaccharide monooxygenase D (287 aa).

Positions 1-17 are cleaved as a signal peptide; sequence MKLSLLAAAAIAPMVSA. Residue H18 participates in Cu(2+) binding. C67 and C189 are joined by a disulfide. Position 176 (H176) interacts with O2. Residue Y186 participates in Cu(2+) binding. N-linked (GlcNAc...) asparagine glycosylation is found at N220 and N250. The segment at 239–287 is disordered; sequence TGGSGSSTGSYNESNAEDSNEYPYQKESGTCQSNFYRREHARDFSHRRA. Residues 274–287 show a composition bias toward basic and acidic residues; sequence YRREHARDFSHRRA.

This sequence belongs to the polysaccharide monooxygenase AA9 family. Requires Cu(2+) as cofactor.

It is found in the secreted. The catalysed reaction is [(1-&gt;4)-beta-D-glucosyl]n+m + reduced acceptor + O2 = 4-dehydro-beta-D-glucosyl-[(1-&gt;4)-beta-D-glucosyl]n-1 + [(1-&gt;4)-beta-D-glucosyl]m + acceptor + H2O.. Functionally, lytic polysaccharide monooxygenase (LPMO) that depolymerizes crystalline and amorphous polysaccharides via the oxidation of scissile alpha- or beta-(1-4)-glycosidic bonds, yielding C1 oxidation products. Catalysis by LPMOs requires the reduction of the active-site copper from Cu(II) to Cu(I) by a reducing agent and H(2)O(2) or O(2) as a cosubstrate. Active on celluloseas as well as on the hemicellulose xyloglucan. Shows synergy with other hydrolases in degrading sorghum stover. In Emericella nidulans (strain FGSC A4 / ATCC 38163 / CBS 112.46 / NRRL 194 / M139) (Aspergillus nidulans), this protein is AA9 family lytic polysaccharide monooxygenase D.